A 504-amino-acid chain; its full sequence is Argininosuccinate lyase 2 (504 aa).

It belongs to the lyase 1 family. Argininosuccinate lyase subfamily.

It is found in the cytoplasm. It catalyses the reaction 2-(N(omega)-L-arginino)succinate = fumarate + L-arginine. It functions in the pathway amino-acid biosynthesis; L-arginine biosynthesis; L-arginine from L-ornithine and carbamoyl phosphate: step 3/3. The protein is Argininosuccinate lyase 2 of Agrobacterium fabrum (strain C58 / ATCC 33970) (Agrobacterium tumefaciens (strain C58)).